We begin with the raw amino-acid sequence, 242 residues long: Ribonuclease PH (242 aa).

Residues R89 and 127-129 each bind phosphate; that span reads GTR.

It belongs to the RNase PH family. In terms of assembly, homohexameric ring arranged as a trimer of dimers.

It carries out the reaction tRNA(n+1) + phosphate = tRNA(n) + a ribonucleoside 5'-diphosphate. Functionally, phosphorolytic 3'-5' exoribonuclease that plays an important role in tRNA 3'-end maturation. Removes nucleotide residues following the 3'-CCA terminus of tRNAs; can also add nucleotides to the ends of RNA molecules by using nucleoside diphosphates as substrates, but this may not be physiologically important. Probably plays a role in initiation of 16S rRNA degradation (leading to ribosome degradation) during starvation. This chain is Ribonuclease PH, found in Neisseria gonorrhoeae (strain ATCC 700825 / FA 1090).